The chain runs to 615 residues: Fibrinogen alpha chain (615 aa).

The signal sequence occupies residues 1–19 (MFSVRDLCLVLSLVGAIKT). Positions 71-602 (CRMKGLIDEV…GHTKARPARG (532 aa)) form a coiled coil. The disordered stretch occupies residues 267–427 (FGGDGHARGD…TKQEFHTGKL (161 aa)). Over residues 293-302 (GTSSIGNVNP) the composition is skewed to polar residues. Threonine 325 carries an O-linked (GalNAc...) threonine glycan. Residues 373 to 396 (GSAGTWNTGSSGSSSFRPDSSGHG) show a composition bias toward low complexity. A disulfide bridge links cysteine 455 with cysteine 485. Residues 530–615 (EFAALGESGS…SPLGEPSLTP (86 aa)) are disordered. The span at 537–549 (SGSSSSKTSTHSK) shows a compositional bias: low complexity. The span at 550–560 (QFVSSSTTVNR) shows a compositional bias: polar residues. Residues 591–601 (QKGHTKARPAR) are compositionally biased toward basic residues.

As to quaternary structure, heterohexamer; disulfide linked. Contains 2 sets of 3 non-identical chains (alpha, beta and gamma). The 2 heterotrimers are in head to head conformation with the N-termini in a small central domain. In terms of processing, conversion of fibrinogen to fibrin is triggered by thrombin, which cleaves fibrinopeptides A and B from alpha and beta chains, and thus exposes the N-terminal polymerization sites responsible for the formation of the soft clot. The soft clot is converted into the hard clot by factor XIIIA which catalyzes the epsilon-(gamma-glutamyl)lysine cross-linking between gamma chains (stronger) and between alpha chains (weaker) of different monomers. Post-translationally, forms F13A-mediated cross-links between a glutamine and the epsilon-amino group of a lysine residue, forming fibronectin-fibrinogen heteropolymers.

The protein localises to the secreted. Cleaved by the protease thrombin to yield monomers which, together with fibrinogen beta (FGB) and fibrinogen gamma (FGG), polymerize to form an insoluble fibrin matrix. Fibrin has a major function in hemostasis as one of the primary components of blood clots. In addition, functions during the early stages of wound repair to stabilize the lesion and guide cell migration during re-epithelialization. Was originally thought to be essential for platelet aggregation, based on in vitro studies using anticoagulated blood. However, subsequent studies have shown that it is not absolutely required for thrombus formation in vivo. Enhances expression of SELP in activated platelets via an ITGB3-dependent pathway. Maternal fibrinogen is essential for successful pregnancy. Fibrin deposition is also associated with infection, where it protects against IFNG-mediated hemorrhage. May also facilitate the immune response via both innate and T-cell mediated pathways. This Bos taurus (Bovine) protein is Fibrinogen alpha chain (FGA).